Consider the following 549-residue polypeptide: Probable protein kinase UbiB (549 aa).

The region spanning 123–501 is the Protein kinase domain; sequence DFNDTPLASA…QQKSHKSNYL (379 aa). Residues 129-137 and lysine 152 contribute to the ATP site; that span reads LASASISQV. Aspartate 287 serves as the catalytic Proton acceptor. 2 consecutive transmembrane segments (helical) span residues 498–518 and 519–539; these read SNYL…LFTQ and IVTL…WAIG.

The protein belongs to the ABC1 family. UbiB subfamily.

It localises to the cell inner membrane. It functions in the pathway cofactor biosynthesis; ubiquinone biosynthesis [regulation]. Functionally, is probably a protein kinase regulator of UbiI activity which is involved in aerobic coenzyme Q (ubiquinone) biosynthesis. This chain is Probable protein kinase UbiB, found in Shewanella frigidimarina (strain NCIMB 400).